The following is a 436-amino-acid chain: MQQVNVIGGGLAGCEAAYYLAQKGIRVRLWEMRPQKATAVHRTADLGELVCSNSLKSDQPNTAQGLLKREMRILGSLLLSCAEKARVPAGSALAVDRELFAGLVSQAILACPSIELCREEVNRVPTGELSIVASGPLTSEALAADLRRITGEENLFFYDAVAPSISADSLDMNKIFRASRYGKGSADYLNCPLDREEYESFYENLINADIKAGHSIDKSLFFNACMPAEVIARRGKDALRYGPMRPVGLEIPGSSKRAYAVLQLRQEDKAGTIYGMVGFQTRMRWGEQERIFRLIPGLEQAEFVRYGVMHRNTYINSPKLLWPSLQCKKRPEIFFAGQITGVEGYMESAATGIIAGINAARWLQGKALLTPHKATIIGALLDFISSSSSQDFQPMNANFGLLPPMEPPIKDKAKRYLAYVERALNKMGEFSESLLN.

Position 8–13 (8–13) interacts with FAD; sequence GGGLAG.

Belongs to the MnmG family. TrmFO subfamily. FAD is required as a cofactor.

Its subcellular location is the cytoplasm. It carries out the reaction uridine(54) in tRNA + (6R)-5,10-methylene-5,6,7,8-tetrahydrofolate + NADH + H(+) = 5-methyluridine(54) in tRNA + (6S)-5,6,7,8-tetrahydrofolate + NAD(+). The catalysed reaction is uridine(54) in tRNA + (6R)-5,10-methylene-5,6,7,8-tetrahydrofolate + NADPH + H(+) = 5-methyluridine(54) in tRNA + (6S)-5,6,7,8-tetrahydrofolate + NADP(+). In terms of biological role, catalyzes the folate-dependent formation of 5-methyl-uridine at position 54 (M-5-U54) in all tRNAs. This chain is Methylenetetrahydrofolate--tRNA-(uracil-5-)-methyltransferase TrmFO, found in Syntrophomonas wolfei subsp. wolfei (strain DSM 2245B / Goettingen).